Here is a 470-residue protein sequence, read N- to C-terminus: Nuclear receptor subfamily 0 group B member 1 (470 aa).

A run of 3 repeats spans residues M1 to C67, F68 to C133, and F134 to C200. The 4 X 67 AA tandem repeats stretch occupies residues M1 to V253. 3 consecutive short sequence motifs (LXXLL motif) follow at residues L13–L17, L80–L84, and L146–L150. One copy of the 4; truncated repeat lies at F201–V253. An NR LBD domain is found at D205–K469. Residues M461 to L466 carry the AF-2 motif motif.

The protein belongs to the nuclear hormone receptor family. NR0 subfamily. As to quaternary structure, homodimer. Interacts with NR5A1, NR5A2, NR0B2 and with COPS2. Interacts with ESRRB; represses ESRRB activity at the GATA6 promoter.

The protein localises to the nucleus. It is found in the cytoplasm. Its function is as follows. Nuclear receptor that lacks a DNA-binding domain and acts as a corepressor that inhibits the transcriptional activity of other nuclear receptors through heterodimeric interactions. Component of a cascade required for the development of the hypothalamic-pituitary-adrenal-gonadal axis. May also have a role in the development of the embryo and in the maintenance of embryonic stem cell pluripotency. The sequence is that of Nuclear receptor subfamily 0 group B member 1 (NR0B1) from Pan troglodytes (Chimpanzee).